Consider the following 709-residue polypeptide: Zinc finger CCHC domain-containing protein 8 (709 aa).

The segment at Met1 to Val47 is disordered. Ala2 is modified (N-acetylalanine). Acidic residues-rich tracts occupy residues Gly8–Glu20 and Asp34–Gly46. A coiled-coil region spans residues Gly48–Pro83. The CCHC-type zinc-finger motif lies at Pro230–Met247. RBM7 binding regions lie at residues Phe289–Leu302 and Phe312–Lys327. Disordered stretches follow at residues Ile409 to Leu518 and Ala533 to Lys667. Over residues Gln410–Pro430 the composition is skewed to low complexity. The span at Pro468–Thr499 shows a compositional bias: pro residues. A phosphothreonine mark is found at Thr474, Thr482, Thr488, and Thr495. Residues Leu552–Cys562 show a composition bias toward polar residues. Phosphoserine is present on Ser601. The span at Met635–Pro645 shows a compositional bias: polar residues. Residues Ser660 and Ser697 each carry the phosphoserine modification. The MTREX binding stretch occupies residues Pro661 to Glu709.

It belongs to the ZCCHC8 family. As to quaternary structure, component of a nuclear TRAMP-like complex, an ATP-dependent exosome regulatory complex consisting of a helicase (MTREX), an oligadenylate polymerase (TENT4B or TENT4A), and a substrate specific RNA-binding factor (ZCCHC7 or ZCCHC8). Several TRAMP-like complexes exist with specific compositions and are associated with nuclear, or nucleolar RNA exosomes. Identified in the spliceosome C complex. Component of the nuclear exosome targeting (NEXT) complex composed of MTREX, ZCCHC8, and RBM7 that directs a subset of non-coding short-lived RNAs for exosomal degradation. Interacts with proteins involved in RNA processing and degradation such as MTREX and RBM7; interaction with MTREX enhances MTREX RNA helicase activity and bridges between RBM7 and MTREX. Interacts with TERC, the telomerase RNA component. Phosphorylation at Thr-495 by GSK3 is triggered in cells entering mitosis.

The protein localises to the nucleus. Its subcellular location is the nucleoplasm. Scaffolding subunit of the trimeric nuclear exosome targeting (NEXT) complex that is involved in the surveillance and turnover of aberrant transcripts and non-coding RNAs. NEXT functions as an RNA exosome cofactor that directs a subset of non-coding short-lived RNAs for exosomal degradation. May be involved in pre-mRNA splicing. It is required for 3'-end maturation of telomerase RNA component (TERC), TERC 3'-end targeting to the nuclear RNA exosome, and for telomerase function. The polypeptide is Zinc finger CCHC domain-containing protein 8 (Zcchc8) (Mus musculus (Mouse)).